Consider the following 264-residue polypeptide: Protein-L-isoaspartate O-methyltransferase (264 aa).

The disordered stretch occupies residues 1-49 (MRKPVGSKDGSGVYSRQGLDGYTPANSNTRISTATLPRPEPLRPAASSA). The span at 24–35 (PANSNTRISTAT) shows a compositional bias: polar residues. Ser112 is a catalytic residue.

Belongs to the methyltransferase superfamily. L-isoaspartyl/D-aspartyl protein methyltransferase family.

The protein localises to the cytoplasm. It carries out the reaction [protein]-L-isoaspartate + S-adenosyl-L-methionine = [protein]-L-isoaspartate alpha-methyl ester + S-adenosyl-L-homocysteine. In terms of biological role, catalyzes the methyl esterification of L-isoaspartyl residues in peptides and proteins that result from spontaneous decomposition of normal L-aspartyl and L-asparaginyl residues. It plays a role in the repair and/or degradation of damaged proteins. The sequence is that of Protein-L-isoaspartate O-methyltransferase from Bordetella avium (strain 197N).